We begin with the raw amino-acid sequence, 1331 residues long: Retrotransposon-like protein 1 (1331 aa).

4 disordered regions span residues 1–123 (MMEP…SQED), 128–147 (TDLA…SSTV), 556–595 (EADE…ETFY), and 971–1033 (PSSE…DEPN). The segment covering 19–30 (SSKQMESSEGSS) has biased composition (low complexity). 3 stretches are compositionally biased toward acidic residues: residues 109-123 (EMEE…SQED), 128-143 (TDLA…EEPD), and 569-578 (GSDDLSESEP). Low complexity predominate over residues 992-1001 (RRVATTTRPT). A compositionally biased stretch (acidic residues) spans 1015–1024 (PESEDEEESE). The next 2 helical transmembrane spans lie at 1070–1090 (FYRS…LVML) and 1117–1137 (LFLD…TQLF). Positions 1309-1331 (SPPREGATLEELPSDADEDAGLD) are disordered. Over residues 1320–1331 (LPSDADEDAGLD) the composition is skewed to acidic residues.

Its subcellular location is the membrane. Functionally, plays an essential role in capillaries endothelial cells for the maintenance of feto-maternal interface and for development of the placenta. In Bos taurus (Bovine), this protein is Retrotransposon-like protein 1 (RTL1).